Consider the following 198-residue polypeptide: Imidazoleglycerol-phosphate dehydratase (198 aa).

The protein belongs to the imidazoleglycerol-phosphate dehydratase family.

It is found in the cytoplasm. The catalysed reaction is D-erythro-1-(imidazol-4-yl)glycerol 3-phosphate = 3-(imidazol-4-yl)-2-oxopropyl phosphate + H2O. The protein operates within amino-acid biosynthesis; L-histidine biosynthesis; L-histidine from 5-phospho-alpha-D-ribose 1-diphosphate: step 6/9. This is Imidazoleglycerol-phosphate dehydratase from Gluconacetobacter diazotrophicus (strain ATCC 49037 / DSM 5601 / CCUG 37298 / CIP 103539 / LMG 7603 / PAl5).